Here is a 463-residue protein sequence, read N- to C-terminus: Glutamate--tRNA ligase 2 (463 aa).

The 'HIGH' region signature appears at 10–20 (PSPTGYLHIGG). The 'KMSKS' region motif lies at 238 to 242 (KLSKR). ATP is bound at residue Lys241.

Belongs to the class-I aminoacyl-tRNA synthetase family. Glutamate--tRNA ligase type 1 subfamily. Monomer.

It localises to the cytoplasm. It catalyses the reaction tRNA(Glu) + L-glutamate + ATP = L-glutamyl-tRNA(Glu) + AMP + diphosphate. Its function is as follows. Catalyzes the attachment of glutamate to tRNA(Glu) in a two-step reaction: glutamate is first activated by ATP to form Glu-AMP and then transferred to the acceptor end of tRNA(Glu). This is Glutamate--tRNA ligase 2 from Helicobacter acinonychis (strain Sheeba).